Reading from the N-terminus, the 664-residue chain is tRNA (carboxymethyluridine(34)-5-O)-methyltransferase ALKBH8 (664 aa).

An RRM domain is found at 43 to 120 (QSLVVANGGL…QKIILYLNFV (78 aa)). A Fe2OG dioxygenase domain is found at 220-337 (KPDQMTINQY…RTSFTFRKVR (118 aa)). 227-229 (NQY) contacts 2-oxoglutarate. Residues H238 and D240 each contribute to the Fe cation site. A Zn(2+)-binding site is contributed by H242. Position 292 (H292) interacts with Fe cation. Residues R328 and R334 each contribute to the 2-oxoglutarate site. Zn(2+) contacts are provided by C341, C343, and C349. Residues 411-664 (ADIGCGNGKY…GNWCVILQKA (254 aa)) form a methyltransferase domain region. The segment at 516–575 (KYLKGNRNSQGKKEEMNSDTSVQRSLVEQMPDMGSRDSASSVPRINDSQEGGCNSRQVSN) is disordered. The segment covering 552–575 (DSASSVPRINDSQEGGCNSRQVSN) has biased composition (polar residues).

This sequence belongs to the alkB family. Interacts with TRMT112. Requires Fe(2+) as cofactor.

Its subcellular location is the cytoplasm. The protein resides in the nucleus. The enzyme catalyses 5-(carboxymethyl)uridine(34) in tRNA + S-adenosyl-L-methionine = 5-(2-methoxy-2-oxoethyl)uridine(34) in tRNA + S-adenosyl-L-homocysteine. Catalyzes the methylation of 5-carboxymethyl uridine to 5-methylcarboxymethyl uridine at the wobble position of the anticodon loop in tRNA via its methyltransferase domain. Catalyzes the last step in the formation of 5-methylcarboxymethyl uridine at the wobble position of the anticodon loop in target tRNA. Has a preference for tRNA(Arg) and tRNA(Glu), and does not bind tRNA(Lys). Binds tRNA and catalyzes the iron and alpha-ketoglutarate dependent hydroxylation of 5-methylcarboxymethyl uridine at the wobble position of the anticodon loop in tRNA via its dioxygenase domain, giving rise to 5-(S)-methoxycarbonylhydroxymethyluridine; has a preference for tRNA(Gly). Required for normal survival after DNA damage. May inhibit apoptosis and promote cell survival and angiogenesis. The sequence is that of tRNA (carboxymethyluridine(34)-5-O)-methyltransferase ALKBH8 (ALKBH8) from Macaca fascicularis (Crab-eating macaque).